Reading from the N-terminus, the 784-residue chain is Probable aminopeptidase 1 (784 aa).

Substrate contacts are provided by residues E103 and G236–N240. H271 contributes to the Zn(2+) binding site. E272 acts as the Proton acceptor in catalysis. The Zn(2+) site is built by H275 and E294.

This sequence belongs to the peptidase M1 family. The cofactor is Zn(2+).

The protein localises to the cytoplasm. In Saccharolobus solfataricus (strain ATCC 35092 / DSM 1617 / JCM 11322 / P2) (Sulfolobus solfataricus), this protein is Probable aminopeptidase 1 (ape1).